An 853-amino-acid polypeptide reads, in one-letter code: Guanine nucleotide exchange protein smcr8a (853 aa).

Positions 47–219 (TSYAKFSKDF…KETELQKMNN (173 aa)) constitute a uDENN FLCN/SMCR8-type domain. Disordered regions lie at residues 272 to 298 (PVMD…SRKS) and 418 to 454 (LKPG…SFSS). A compositionally biased stretch (polar residues) spans 280 to 298 (DTNPSDSAENTVETESRKS). One can recognise a cDENN FLCN/SMCR8-type domain in the interval 316–753 (RLKTLEELCD…LISHLADHRT (438 aa)). Residues 421–432 (GVESGEGPPESS) are compositionally biased toward low complexity. Over residues 433 to 454 (TSDITQETSEAADTETKGSFSS) the composition is skewed to polar residues. The region spanning 762–826 (FLHIQGMLTQ…IIQYLSELIK (65 aa)) is the dDENN FLCN/SMCR8-type domain.

It belongs to the SMCR8 family. As to quaternary structure, component of the C9orf72-SMCR8 complex. The C9orf72-SMCR8 complex associates with the ATG1/ULK1 kinase complex.

It is found in the cytoplasm. It localises to the nucleus. Functionally, component of the C9orf72-SMCR8 complex, a complex that has guanine nucleotide exchange factor (GEF) activity and regulates autophagy. In the complex, C9orf72 and SMCR8 probably constitute the catalytic subunits that promote the exchange of GDP to GTP, converting inactive GDP-bound RAB8A and RAB39B into their active GTP-bound form, thereby promoting autophagosome maturation. The C9orf72-SMCR8 complex also acts as a negative regulator of autophagy initiation by interacting with the ATG1/ULK1 kinase complex and inhibiting its protein kinase activity. The sequence is that of Guanine nucleotide exchange protein smcr8a (smcr8a) from Danio rerio (Zebrafish).